A 239-amino-acid chain; its full sequence is Leucine rich adaptor protein 1 (239 aa).

LRR repeat units follow at residues 55–83 (LGDK…LVTL) and 93–114 (LLEE…QYSL). Over residues 107 to 118 (LTSSQYSLTGGS) the composition is skewed to low complexity. The disordered stretch occupies residues 107–140 (LTSSQYSLTGGSPERSRRGSWDSLPDTSSTDRLD). Ser118, Ser126, and Ser129 each carry phosphoserine.

As to quaternary structure, forms a tripartite complex with CDC42BPA/CDC42BPB and MYO18A acting as an adapter connecting both. Its binding to CDC42BPA/CDC42BPB results in their activation by abolition of their negative autoregulation. Interacts with CDC42BPA and CDC42BPB. In terms of processing, phosphorylated.

It localises to the cytoplasm. Acts as an activator of the canonical NF-kappa-B pathway and drive the production of pro-inflammatory cytokines. Promotes the antigen (Ag)-presenting and priming function of dendritic cells via the canonical NF-kappa-B pathway. In concert with MYO18A and CDC42BPA/CDC42BPB, is involved in modulating lamellar actomyosin retrograde flow that is crucial to cell protrusion and migration. Activates CDC42BPA/CDC42BPB and targets it to actomyosin through its interaction with MYO18A, leading to MYL9/MLC2 phosphorylation and MYH9/MYH10-dependent actomyosin assembly in the lamella. This chain is Leucine rich adaptor protein 1 (Lurap1), found in Rattus norvegicus (Rat).